The primary structure comprises 1132 residues: Telomerase reverse transcriptase (1132 aa).

The RNA-interacting domain 1 stretch occupies residues Met1–Arg230. A GQ motif region spans residues Val58 to Leu197. The interval Trp137–Leu141 is required for regulating specificity for telomeric DNA and for processivity for primer elongation. Positions Ala210 to Pro320 are disordered. Over residues Pro213–Leu234 the composition is skewed to low complexity. The Bipartite nuclear localization signal signature appears at Arg222–Arg240. At Ser227 the chain carries Phosphoserine; by PKB/AKT1. Positions Ser231–Val324 are linker. A compositionally biased stretch (basic residues) spans Arg293–His304. A required for oligomerization region spans residues Arg301 to Glu538. A compositionally biased stretch (pro residues) spans Thr310–Pro320. An RNA-interacting domain 2 region spans residues Tyr325–Ser550. Positions Thr328–Tyr333 match the TFLY; involved in RNA binding motif. The interval Pro376–Arg521 is QFP motif. A CP motif region spans residues Leu397 to Ala417. Ser457 bears the Phosphoserine; by DYRK2 mark. The 331-residue stretch at Glu605–Leu935 folds into the Reverse transcriptase domain. Tyr707 carries the post-translational modification Phosphotyrosine; by SRC-type Tyr-kinases. Residues Asp712, Asp868, and Asp869 each contribute to the Mg(2+) site. Residues Leu914–Phe928 form a required for oligomerization region. The primer grip sequence stretch occupies residues Trp930 to Leu934. The segment at Asp936 to Asp1132 is CTE.

Belongs to the reverse transcriptase family. Telomerase subfamily. In terms of assembly, catalytic component of the telomerase holoenzyme complex composed of one molecule of TERT, one molecule of WRAP53/TCAB1, two molecules of H/ACA ribonucleoprotein complex subunits DKC1, NOP10, NHP2 and GAR1, and a telomerase RNA template component (TERC). The telomerase holoenzyme complex is associated with TEP1, SMG6/EST1A and POT1. The molecular chaperone HSP90/P23 complex is required for correct assembly and stabilization of the active telomerase. Interacts directly with HSP90A and PTGES3. Interacts with HSPA1A; the interaction occurs in the absence of TERC and dissociates once the complex has formed. Interacts with RAN; the interaction promotes nuclear export of TERT. Interacts with XPO1. Interacts with PTPN11; the interaction retains TERT in the nucleus. Interacts with NCL (via RRM1 and C-terminal RRM4/Arg/Gly-rich domains); the interaction is important for nucleolar localization of TERT. Interacts with SMARCA4 (via the bromodomain); the interaction regulates Wnt-mediated signaling. Interacts with MCRS1 (isoform MCRS2); the interaction inhibits in vitro telomerase activity. Interacts with PIF1; the interaction has no effect on the elongation activity of TERT. Interacts with PML; the interaction recruits TERT to PML bodies and inhibits telomerase activity. Interacts with GNL3L. Interacts with isoform 1 and isoform 2 of NVL. Interacts with DHX36. Interacts with ATF7. Post-translationally, phosphorylation at Tyr-707 under oxidative stress leads to translocation of TERT to the cytoplasm and reduces its antiapoptotic activity. Dephosphorylated by SHP2/PTPN11 leading to nuclear retention. Phosphorylation at Ser-227 by the AKT pathway promotes nuclear location. Phosphorylation at the G2/M phase at Ser-457 by DYRK2 promotes ubiquitination by the EDVP complex and degradation. In terms of processing, ubiquitinated by the EDVP complex, a E3 ligase complex following phosphorylation at Ser-457 by DYRK2. Ubiquitinated leads to proteasomal degradation. (Microbial infection) In case of infection by HIV-1, the EDVP complex is hijacked by HIV-1 via interaction between HIV-1 Vpr and DCAF1/VPRBP, leading to ubiquitination and degradation. Expressed at a high level in thymocyte subpopulations, at an intermediate level in tonsil T-lymphocytes, and at a low to undetectable level in peripheral blood T-lymphocytes.

The protein resides in the nucleus. It is found in the nucleolus. The protein localises to the nucleoplasm. It localises to the chromosome. Its subcellular location is the telomere. The protein resides in the cytoplasm. It is found in the PML body. The catalysed reaction is DNA(n) + a 2'-deoxyribonucleoside 5'-triphosphate = DNA(n+1) + diphosphate. Telomerase is a ribonucleoprotein enzyme essential for the replication of chromosome termini in most eukaryotes. Active in progenitor and cancer cells. Inactive, or very low activity, in normal somatic cells. Catalytic component of the teleromerase holoenzyme complex whose main activity is the elongation of telomeres by acting as a reverse transcriptase that adds simple sequence repeats to chromosome ends by copying a template sequence within the RNA component of the enzyme. Catalyzes the RNA-dependent extension of 3'-chromosomal termini with the 6-nucleotide telomeric repeat unit, 5'-TTAGGG-3'. The catalytic cycle involves primer binding, primer extension and release of product once the template boundary has been reached or nascent product translocation followed by further extension. More active on substrates containing 2 or 3 telomeric repeats. Telomerase activity is regulated by a number of factors including telomerase complex-associated proteins, chaperones and polypeptide modifiers. Modulates Wnt signaling. Plays important roles in aging and antiapoptosis. The chain is Telomerase reverse transcriptase (TERT) from Homo sapiens (Human).